A 143-amino-acid polypeptide reads, in one-letter code: Histone H2AX (143 aa).

The interval 1 to 22 (MSGRGKTGGKARAKAKSRSSRA) is disordered. Residue Ser2 is modified to N-acetylserine. Ser2 carries the post-translational modification Phosphoserine. Lys6 and Lys10 each carry N6-acetyllysine. Over residues 7 to 19 (TGGKARAKAKSRS) the composition is skewed to basic residues. Lys10 is modified (N6-lactoyllysine; alternate). Residues Lys14 and Lys16 each participate in a glycyl lysine isopeptide (Lys-Gly) (interchain with G-Cter in ubiquitin) cross-link. The residue at position 37 (Lys37) is an N6-acetyllysine; by CREBBP and EP300. Residue Lys120 forms a Glycyl lysine isopeptide (Lys-Gly) (interchain with G-Cter in ubiquitin) linkage. Phosphoserine occurs at positions 121 and 122. The tract at residues 121 to 143 (SSATVGPKAPAVGKKASQASQEY) is disordered. Glycyl lysine isopeptide (Lys-Gly) (interchain with G-Cter in SUMO2) cross-links involve residues Lys128 and Lys135. Ser137 carries the post-translational modification Phosphoserine. A Phosphoserine; by ATM, ATR and PRKDC modification is found at Ser140. Positions 140–141 (SQ) match the [ST]-Q motif motif. Residue Tyr143 is modified to Phosphotyrosine; by WSTF.

Belongs to the histone H2A family. In terms of assembly, the nucleosome is a histone octamer containing two molecules each of H2A, H2B, H3 and H4 assembled in one H3-H4 heterotetramer and two H2A-H2B heterodimers. The octamer wraps approximately 147 bp of DNA. Interacts with numerous proteins required for DNA damage signaling and repair when phosphorylated on Ser-140. These include MDC1, BRCA1 and the MRN complex, composed of MRE11, RAD50, and NBN. Interaction with the MRN complex is mediated at least in part by NBN. Also interacts with DHX9/NDHII when phosphorylated on Ser-140 and MCPH1 when phosphorylated at Ser-140 or Tyr-143. Interacts with ARRB2; the interaction is detected in the nucleus upon OR1D2 stimulation. Interacts with WRAP53/TCAB1. Interacts with TP53BP1. Interacts with HDGFL2. In terms of processing, phosphorylated on Ser-140 (to form gamma-H2AX or H2AX139ph) in response to DNA double strand breaks (DSBs) generated by exogenous genotoxic agents, by stalled replication forks, by meiotic recombination events and during immunoglobulin class switching in lymphocytes. Phosphorylation can extend up to several thousand nucleosomes from the actual site of the DSB and may mark the surrounding chromatin for recruitment of proteins required for DNA damage signaling and repair. Widespread phosphorylation may also serve to amplify the damage signal or aid repair of persistent lesions. Phosphorylation of Ser-140 (H2AX139ph) in response to ionizing radiation is mediated by both ATM and PRKDC while defects in DNA replication induce Ser-140 phosphorylation (H2AX139ph) subsequent to activation of ATR and PRKDC. Dephosphorylation of Ser-140 by PP2A is required for DNA DSB repair. In meiosis, Ser-140 phosphorylation (H2AX139ph) first occurs at synaptonemal complexes during leptotene and is an ATM-dependent response to the formation of programmed DSBs by SPO11. Ser-140 phosphorylation (H2AX139ph) subsequently occurs at unsynapsed regions of both autosomes and the XY bivalent during zygotene and is ATR- and BRCA1-dependent. Ser-140 phosphorylation (H2AX139ph) may also be required for transcriptional repression of unsynapsed chromatin and meiotic sex chromosome inactivation (MSCI), whereby the X and Y chromosomes condense in pachytene to form the heterochromatic XY-body. During immunoglobulin class switch recombination in lymphocytes, Ser-140 phosphorylation (H2AX139ph) at sites of DNA-recombination requires the activation-induced cytidine deaminase AICDA. Phosphorylation at Tyr-143 (H2AXY142ph) by BAZ1B/WSTF determines the relative recruitment of either DNA repair or pro-apoptotic factors. Phosphorylation at Tyr-143 (H2AXY142ph) favors the recruitment of APBB1/FE65 and pro-apoptosis factors such as MAPK8/JNK1, triggering apoptosis. In contrast, dephosphorylation of Tyr-143 by EYA proteins (EYA1, EYA2, EYA3 or EYA4) favors the recruitment of MDC1-containing DNA repair complexes to the tail of phosphorylated Ser-140 (H2AX139ph). Phosphorylated by VRK1. Post-translationally, monoubiquitination of Lys-120 (H2AXK119ub) by RING1 and RNF2/RING2 complex gives a specific tag for epigenetic transcriptional repression. Following DNA double-strand breaks (DSBs), it is ubiquitinated through 'Lys-63' linkage of ubiquitin moieties by the E2 ligase UBE2N and the E3 ligases RNF8 and RNF168, leading to the recruitment of repair proteins to sites of DNA damage. Ubiquitination at Lys-14 and Lys-16 (H2AK13Ub and H2AK15Ub, respectively) in response to DNA damage is initiated by RNF168 that mediates monoubiquitination at these 2 sites, and 'Lys-63'-linked ubiquitin are then conjugated to monoubiquitin; RNF8 is able to extend 'Lys-63'-linked ubiquitin chains in vitro. H2AK119Ub and ionizing radiation-induced 'Lys-63'-linked ubiquitination (H2AK13Ub and H2AK15Ub) are distinct events. Acetylation at Lys-6 (H2AXK5ac) by KAT5 component of the NuA4 histone acetyltransferase complex promotes NBN/NBS1 assembly at the sites of DNA damage. Acetylation at Lys-37 increases in S and G2 phases. This modification has been proposed to be important for DNA double-strand break repair. In terms of tissue distribution, most abundant in testis, thymus and spleen.

Its subcellular location is the nucleus. The protein localises to the chromosome. Its function is as follows. Variant histone H2A which replaces conventional H2A in a subset of nucleosomes. Nucleosomes wrap and compact DNA into chromatin, limiting DNA accessibility to the cellular machineries which require DNA as a template. Histones thereby play a central role in transcription regulation, DNA repair, DNA replication and chromosomal stability. DNA accessibility is regulated via a complex set of post-translational modifications of histones, also called histone code, and nucleosome remodeling. Required for checkpoint-mediated arrest of cell cycle progression in response to low doses of ionizing radiation and for efficient repair of DNA double strand breaks (DSBs) specifically when modified by C-terminal phosphorylation. This chain is Histone H2AX, found in Mus musculus (Mouse).